A 317-amino-acid chain; its full sequence is 4-hydroxy-3-methylbut-2-enyl diphosphate reductase (317 aa).

C12 contacts [4Fe-4S] cluster. The (2E)-4-hydroxy-3-methylbut-2-enyl diphosphate site is built by H43 and H81. Residues H43 and H81 each contribute to the dimethylallyl diphosphate site. Isopentenyl diphosphate contacts are provided by H43 and H81. Residue C103 coordinates [4Fe-4S] cluster. H131 is a (2E)-4-hydroxy-3-methylbut-2-enyl diphosphate binding site. H131 is a binding site for dimethylallyl diphosphate. Residue H131 participates in isopentenyl diphosphate binding. E133 serves as the catalytic Proton donor. T172 serves as a coordination point for (2E)-4-hydroxy-3-methylbut-2-enyl diphosphate. Position 200 (C200) interacts with [4Fe-4S] cluster. Residues S228, N230, and S273 each coordinate (2E)-4-hydroxy-3-methylbut-2-enyl diphosphate. The dimethylallyl diphosphate site is built by S228, N230, and S273. The isopentenyl diphosphate site is built by S228, N230, and S273.

The protein belongs to the IspH family. [4Fe-4S] cluster serves as cofactor.

The enzyme catalyses isopentenyl diphosphate + 2 oxidized [2Fe-2S]-[ferredoxin] + H2O = (2E)-4-hydroxy-3-methylbut-2-enyl diphosphate + 2 reduced [2Fe-2S]-[ferredoxin] + 2 H(+). The catalysed reaction is dimethylallyl diphosphate + 2 oxidized [2Fe-2S]-[ferredoxin] + H2O = (2E)-4-hydroxy-3-methylbut-2-enyl diphosphate + 2 reduced [2Fe-2S]-[ferredoxin] + 2 H(+). The protein operates within isoprenoid biosynthesis; dimethylallyl diphosphate biosynthesis; dimethylallyl diphosphate from (2E)-4-hydroxy-3-methylbutenyl diphosphate: step 1/1. Its pathway is isoprenoid biosynthesis; isopentenyl diphosphate biosynthesis via DXP pathway; isopentenyl diphosphate from 1-deoxy-D-xylulose 5-phosphate: step 6/6. Functionally, catalyzes the conversion of 1-hydroxy-2-methyl-2-(E)-butenyl 4-diphosphate (HMBPP) into a mixture of isopentenyl diphosphate (IPP) and dimethylallyl diphosphate (DMAPP). Acts in the terminal step of the DOXP/MEP pathway for isoprenoid precursor biosynthesis. This is 4-hydroxy-3-methylbut-2-enyl diphosphate reductase from Exiguobacterium sp. (strain ATCC BAA-1283 / AT1b).